A 95-amino-acid polypeptide reads, in one-letter code: Large ribosomal subunit protein bL25 (95 aa).

Belongs to the bacterial ribosomal protein bL25 family. As to quaternary structure, part of the 50S ribosomal subunit; part of the 5S rRNA/L5/L18/L25 subcomplex. Contacts the 5S rRNA. Binds to the 5S rRNA independently of L5 and L18.

Functionally, this is one of the proteins that binds to the 5S RNA in the ribosome where it forms part of the central protuberance. The chain is Large ribosomal subunit protein bL25 from Shewanella loihica (strain ATCC BAA-1088 / PV-4).